The following is a 443-amino-acid chain: Probable nitrate/nitrite antiporter NarK1 (443 aa).

The next 12 helical transmembrane spans lie at 23–43 (TLAF…GVPI), 56–76 (WISA…GILA), 79–99 (YGGR…AYLV), 108–128 (LLLY…GIAW), 142–164 (LGVF…ALIA), 182–202 (FIPF…WFGT), 230–250 (FSLY…WLPK), 255–275 (VFGL…FPAS), 298–318 (FGII…IVLY), 329–349 (FTMG…GMGI), 368–388 (AVGG…PPLF), and 401–421 (TFFV…LTVL).

This sequence belongs to the major facilitator superfamily. Nitrate/nitrite porter (TC 2.A.1.8) family.

It localises to the cell membrane. It carries out the reaction nitrate(in) + nitrite(out) = nitrate(out) + nitrite(in). Its function is as follows. Probable nitrate/nitrite antiporter that may be involved in nitrate import and nitrite export during anaerobic growth. The polypeptide is Probable nitrate/nitrite antiporter NarK1 (Thermus thermophilus).